We begin with the raw amino-acid sequence, 126 residues long: Large ribosomal subunit protein bL12 (126 aa).

The protein belongs to the bacterial ribosomal protein bL12 family. Homodimer. Part of the ribosomal stalk of the 50S ribosomal subunit. Forms a multimeric L10(L12)X complex, where L10 forms an elongated spine to which 2 to 4 L12 dimers bind in a sequential fashion. Binds GTP-bound translation factors.

Its function is as follows. Forms part of the ribosomal stalk which helps the ribosome interact with GTP-bound translation factors. Is thus essential for accurate translation. The chain is Large ribosomal subunit protein bL12 from Chlorobaculum parvum (strain DSM 263 / NCIMB 8327) (Chlorobium vibrioforme subsp. thiosulfatophilum).